Reading from the N-terminus, the 133-residue chain is Phosphomevalonate dehydratase small subunit (133 aa).

Catalysis depends on S62, which acts as the Proton acceptor.

Belongs to the AcnX type II small subunit family. In terms of assembly, heterodimer composed of a large subunit (PMDh-L) and a small subunit (PMDh-S).

The enzyme catalyses (R)-5-phosphomevalonate = (2E)-3-methyl-5-phosphooxypent-2-enoate + H2O. It participates in isoprenoid biosynthesis; isopentenyl diphosphate biosynthesis via mevalonate pathway. Functionally, component of a hydro-lyase that catalyzes the dehydration of mevalonate 5-phosphate (MVA5P) to form trans-anhydromevalonate 5-phosphate (tAHMP). Involved in the archaeal mevalonate (MVA) pathway, which provides fundamental precursors for isoprenoid biosynthesis, such as isopentenyl diphosphate (IPP) and dimethylallyl diphosphate (DMAPP). This chain is Phosphomevalonate dehydratase small subunit, found in Thermococcus kodakarensis (strain ATCC BAA-918 / JCM 12380 / KOD1) (Pyrococcus kodakaraensis (strain KOD1)).